A 152-amino-acid polypeptide reads, in one-letter code: Large ribosomal subunit protein uL15 (152 aa).

Residues 1-57 (MTSTLNTLKSNSGSRKKKLRKGRGIAAGQGASCGFGMRGQKSRSGRPTRPGFEGGQM) are disordered. Over residues 14–23 (SRKKKLRKGR) the composition is skewed to basic residues. A compositionally biased stretch (gly residues) spans 25–37 (IAAGQGASCGFGM).

The protein belongs to the universal ribosomal protein uL15 family. Part of the 50S ribosomal subunit.

Functionally, binds to the 23S rRNA. The protein is Large ribosomal subunit protein uL15 of Prochlorococcus marinus (strain AS9601).